The chain runs to 418 residues: Cell division protein FtsA (418 aa).

This sequence belongs to the FtsA/MreB family. As to quaternary structure, self-interacts. Interacts with FtsZ.

The protein resides in the cell inner membrane. Cell division protein that is involved in the assembly of the Z ring. May serve as a membrane anchor for the Z ring. The sequence is that of Cell division protein FtsA from Buchnera aphidicola subsp. Schizaphis graminum (strain Sg).